Consider the following 191-residue polypeptide: Zinc finger protein GIS2 (191 aa).

A C2H2-type zinc finger spans residues 55-77 (FKCHYCFRNFPTSQALGGHQNAH).

In terms of tissue distribution, expressed in inflorescence meristems, floral meristems and stem epidermis.

The protein resides in the nucleus. Probable transcription factor required for the initiation of inflorescence trichomes in response to gibberellin and cytokinin. Is not involved in the regulation of trichome branching. Is functionally equivalent to ZFP8. This Arabidopsis thaliana (Mouse-ear cress) protein is Zinc finger protein GIS2 (GIS2).